The chain runs to 428 residues: tRNA dimethylallyltransferase (428 aa).

21–28 contacts ATP; that stretch reads GTTGVGKS. 23 to 28 is a binding site for dimethylallyl diphosphate; the sequence is TGVGKS. Interaction with substrate tRNA regions lie at residues 46–49 and 170–174; these read DSMQ and RRVQR. The interval 199-207 is core aggregation region; sequence FDTLFLWLY. Positions 210-232 are interaction with isopentenylpyrophosphate transferase; it reads PEPLFQRLDDRVDDMLERGALQE. Interaction with substrate tRNA stretches follow at residues 256–258 and 284–302; these read QVI and RMKT…WIKK. The Matrin-type zinc-finger motif lies at 373–409; it reads YTCNVCRNADGKNVVAIGEKYWKIHLGSRRHKSNLKR. Zn(2+) is bound by residues Cys375, Cys378, His397, and His403.

It belongs to the IPP transferase family.

It localises to the cytoplasm. Its subcellular location is the mitochondrion. It is found in the nucleus. It catalyses the reaction adenosine(37) in tRNA + dimethylallyl diphosphate = N(6)-dimethylallyladenosine(37) in tRNA + diphosphate. Its function is as follows. Catalyzes the transfer of a dimethylallyl group onto the adenine at position 37 in the anticodon loop on a specific subset of tRNAs both in the cytosol and the mitochondrion, leading to the formation of N6-(dimethylallyl)adenosine (i(6)A). This modification optimizes the codon:anticodon fit in the ribosome and promotes translational fidelity. Competes with the farnesyl pyrophosphate synthase ERG20 for the common substrate dimethylallyl diphosphate (DMAPP). This is tRNA dimethylallyltransferase (MOD5) from Saccharomyces cerevisiae (strain ATCC 204508 / S288c) (Baker's yeast).